A 519-amino-acid chain; its full sequence is T-complex protein 11-like protein 2 (519 aa).

The tract at residues 1–30 is disordered; that stretch reads MPFNGEKQCVGEDQPSDSDSSRFSESMASL. The residue at position 16 (S16) is a Phosphoserine. Positions 17–29 are enriched in low complexity; that stretch reads DSDSSRFSESMAS.

The protein belongs to the TCP11 family. Interacts with FMNL2; this interaction promotes muscle-derived satellite cell (MDSC) migration and differentiation.

It localises to the cytoplasm. Its subcellular location is the cytoskeleton. In terms of biological role, promotes the migration of muscle-derived satellite cells (MDSCs) during differentiation throught interaction with FMNL2 and therefore may participate in microfilament assembly. This Homo sapiens (Human) protein is T-complex protein 11-like protein 2.